The sequence spans 361 residues: sn-glycerol-3-phosphate import ATP-binding protein UgpC (361 aa).

The ABC transporter domain maps to 4–235 (VTLRNVRKTY…PATTFVASFI (232 aa)). 37 to 44 (GPSGCGKS) contacts ATP.

It belongs to the ABC transporter superfamily. sn-glycerol-3-phosphate importer (TC 3.A.1.1.3) family. In terms of assembly, the complex is composed of two ATP-binding proteins (UgpC), two transmembrane proteins (UgpA and UgpE) and a solute-binding protein (UgpB).

The protein localises to the cell inner membrane. It catalyses the reaction sn-glycerol 3-phosphate(out) + ATP + H2O = sn-glycerol 3-phosphate(in) + ADP + phosphate + H(+). Its function is as follows. Part of the ABC transporter complex UgpBAEC involved in sn-glycerol-3-phosphate (G3P) import. Responsible for energy coupling to the transport system. The sequence is that of sn-glycerol-3-phosphate import ATP-binding protein UgpC from Rhodopseudomonas palustris (strain BisA53).